The following is a 350-amino-acid chain: Cyclin-O (350 aa).

The tract at residues 1–89 (MVTPCPTSPS…GSPLPGPAQP (89 aa)) is disordered. Positions 28 to 42 (PVKKSRRPRLRRKQP) are enriched in basic residues. Position 81 is a phosphoserine (Ser81).

It belongs to the cyclin family. In terms of tissue distribution, present in respiratory cells (at protein level).

The protein localises to the cytoplasm. It is found in the nucleus. The protein resides in the nucleolus. In terms of biological role, specifically required for generation of multiciliated cells, possibly by promoting a cell cycle state compatible with centriole amplification and maturation. Acts downstream of MCIDAS to promote mother centriole amplification and maturation in preparation for apical docking. This chain is Cyclin-O, found in Homo sapiens (Human).